A 64-amino-acid polypeptide reads, in one-letter code: Large ribosomal subunit protein bL35 (64 aa).

The span at 1 to 24 shows a compositional bias: basic residues; that stretch reads MPKMKSHRGACKRFKKTASGKVKR. Positions 1–64 are disordered; the sequence is MPKMKSHRGA…EKQIKRMILA (64 aa). The span at 25–35 shows a compositional bias: basic and acidic residues; that stretch reads ERMYGSHNLEK. A compositionally biased stretch (basic residues) spans 36–45; sequence KNRKRTRRLH.

This sequence belongs to the bacterial ribosomal protein bL35 family.

This Prosthecochloris aestuarii (strain DSM 271 / SK 413) protein is Large ribosomal subunit protein bL35.